We begin with the raw amino-acid sequence, 270 residues long: uncharacterized protein (270 aa).

The disordered stretch occupies residues 166-186; that stretch reads RRKENNISNESVSEEPESPLF.

This is an uncharacterized protein from Ostreid herpesvirus 1 (isolate France) (OsHV-1).